Reading from the N-terminus, the 366-residue chain is MKIFDYMEKYDYEQLVMCQDKESGLKAIICIHVTTLGPALGGMRMWTYASEEEAIEDALRLGRGMTYKNAAAGLNLGGGKTVIIGDPRKDKNEAMFRALGRFIQGLNGRYITAEDVGTTVEDMDIIHEETRYVTGVSPAFGSSGNPSPVTAYGVYRGMKAAAKEAFGDDSLEGKVVAVQGVGHVAYELCKHLHNEGAKLIVTDINKENADRAVQEFGAEFVHPDKIYDVECDIFAPCALGAIINDETIERLKCKVVAGSANNQLKEERHGKMLEEKGIVYAPDYVINAGGVINVADELLGYNRERAMKKVEGIYDKILKVFEIAKRDGIPSYLAADRMAEERIEMMRKTRSTFLQDQRNLINFNNK.

Residue Lys80 is part of the active site. 180-186 (GVGHVAY) is an NAD(+) binding site.

It belongs to the Glu/Leu/Phe/Val dehydrogenases family. Homooctamer.

The catalysed reaction is L-leucine + NAD(+) + H2O = 4-methyl-2-oxopentanoate + NH4(+) + NADH + H(+). Its pathway is amino-acid degradation; L-leucine degradation; 4-methyl-2-oxopentanoate from L-leucine (dehydrogenase route): step 1/1. With respect to regulation, inhibited by pyridoxal phosphate. Its function is as follows. Catalyzes the reversible deamination of L-leucine to 4-methyl-2-oxopentanoate. Exhibits the highest activity with L-leucine as substrate, but can also use other L-amino acids such as L-isoleucine, L-valine and L-2-aminovaleric acid. All of the oxo analogs of the amino acid substrates serve as good substrates for the reverse reaction. In Thermoactinomyces intermedius, this protein is Leucine dehydrogenase (ldh).